Consider the following 456-residue polypeptide: F-box/FBD/LRR-repeat protein At1g13780 (456 aa).

Residues 9 to 55 (FDRISELPESLISQILLHLPTKASVKTSVLSTRWKNLWLNVPGLDLN) enclose the F-box domain. LRR repeat units lie at residues 197–220 (LEEL…SLKR), 243–266 (APGL…NLTS), 302–325 (ISSV…SKVG), and 355–379 (FPNL…ELVN). An FBD domain is found at 372–424 (MEKFELVNVPRCFVSTLEHVEIKGLFDWGEQDMKIASYFLENSAVLKKLILSF).

In Arabidopsis thaliana (Mouse-ear cress), this protein is F-box/FBD/LRR-repeat protein At1g13780.